The sequence spans 252 residues: Imidazole glycerol phosphate synthase subunit HisF (252 aa).

Active-site residues include D11 and D130.

Belongs to the HisA/HisF family. As to quaternary structure, heterodimer of HisH and HisF.

It is found in the cytoplasm. It carries out the reaction 5-[(5-phospho-1-deoxy-D-ribulos-1-ylimino)methylamino]-1-(5-phospho-beta-D-ribosyl)imidazole-4-carboxamide + L-glutamine = D-erythro-1-(imidazol-4-yl)glycerol 3-phosphate + 5-amino-1-(5-phospho-beta-D-ribosyl)imidazole-4-carboxamide + L-glutamate + H(+). It participates in amino-acid biosynthesis; L-histidine biosynthesis; L-histidine from 5-phospho-alpha-D-ribose 1-diphosphate: step 5/9. In terms of biological role, IGPS catalyzes the conversion of PRFAR and glutamine to IGP, AICAR and glutamate. The HisF subunit catalyzes the cyclization activity that produces IGP and AICAR from PRFAR using the ammonia provided by the HisH subunit. The polypeptide is Imidazole glycerol phosphate synthase subunit HisF (Bacillus cereus (strain ATCC 10987 / NRS 248)).